A 443-amino-acid chain; its full sequence is DNA double-strand break repair protein Mre11 (443 aa).

Mn(2+) contacts are provided by D8, H10, D49, and N84. H85 (proton donor) is an active-site residue. H169, H201, and H203 together coordinate Mn(2+). The segment at 382–429 (QEEGAEERVVEEETEKKVEEQFKGDEEADEAERRAEETEKAKSTKKAR) is disordered. Positions 395–423 (TEKKVEEQFKGDEEADEAERRAEETEKAK) are enriched in basic and acidic residues.

It belongs to the MRE11/RAD32 family. As to quaternary structure, homodimer. Forms a heterotetramer composed of two Mre11 subunits and two Rad50 subunits. The cofactor is Mn(2+).

Nuclease activity is regulated by Rad50. Its function is as follows. Part of the Rad50/Mre11 complex, which is involved in the early steps of DNA double-strand break (DSB) repair. The complex may facilitate opening of the processed DNA ends to aid in the recruitment of HerA and NurA. Mre11 binds to DSB ends and has both double-stranded 3'-5' exonuclease activity and single-stranded endonuclease activity. In Archaeoglobus fulgidus (strain ATCC 49558 / DSM 4304 / JCM 9628 / NBRC 100126 / VC-16), this protein is DNA double-strand break repair protein Mre11.